The following is a 527-amino-acid chain: Type 2 DNA topoisomerase 6 subunit B (527 aa).

ATP contacts are provided by residues Asn39, Asp73, 94 to 95 (SK), 103 to 110 (GVFGLGLK), and Lys421.

It belongs to the TOP6B family. In terms of assembly, homodimer. Heterotetramer of two Top6A and two Top6B chains.

The catalysed reaction is ATP-dependent breakage, passage and rejoining of double-stranded DNA.. Functionally, relaxes both positive and negative superturns and exhibits a strong decatenase activity. The protein is Type 2 DNA topoisomerase 6 subunit B of Pyrobaculum aerophilum (strain ATCC 51768 / DSM 7523 / JCM 9630 / CIP 104966 / NBRC 100827 / IM2).